Consider the following 447-residue polypeptide: Coagulation factor VII (447 aa).

A signal peptide spans 1–23 (MLSQAWALALLCFLLSLWGSLPA). The propeptide occupies 24-40 (VFLPQEQALSILHRPRR). In terms of domain architecture, Gla spans 41–85 (ANGFLEELLPGSLERECREELCSFEEAHEIFRNEERTRQFWVSYN). 11 positions are modified to 4-carboxyglutamate: Glu46, Glu47, Glu54, Glu56, Glu59, Glu60, Glu65, Glu66, Glu69, Glu74, and Glu75. A disulfide bridge connects residues Cys57 and Cys62. The 37-residue stretch at 86–122 (DGDQCASSPCQNGGSCEDQLRSYICFCPDGFEGRNCE) folds into the EGF-like 1; calcium-binding domain. Intrachain disulfides connect Cys90–Cys101, Cys95–Cys110, Cys112–Cys121, Cys131–Cys142, Cys138–Cys152, Cys154–Cys167, Cys175–Cys302, Cys199–Cys204, Cys218–Cys234, and Cys350–Cys369. O-linked (Glc...) serine glycosylation is present at Ser92. O-linked (Glc...) serine; alternate glycosylation occurs at Ser92. A glycan (O-linked (Xyl...) serine; alternate) is linked at Ser92. A glycan (O-linked (Fuc) serine) is linked at Ser100. The 42-residue stretch at 127–168 (SQLICANDNGGCEQYCGADPGAGRFCWCHEGYALQADGVSCA) folds into the EGF-like 2 domain. Asn185 carries N-linked (GlcNAc...) asparagine glycosylation. The 240-residue stretch at 193–432 (IVGGHVCPKG…YTAWLRQLMG (240 aa)) folds into the Peptidase S1 domain. His233 functions as the Charge relay system in the catalytic mechanism. Asn243 is a glycosylation site (N-linked (GlcNAc...) asparagine). Catalysis depends on Asp282, which acts as the Charge relay system. Asp378 provides a ligand contact to substrate. An intrachain disulfide couples Cys380 to Cys408. Ser384 serves as the catalytic Charge relay system.

The protein belongs to the peptidase S1 family. Heterodimer of a light chain and a heavy chain linked by a disulfide bond. The vitamin K-dependent, enzymatic carboxylation of some glutamate residues allows the modified protein to bind calcium. Post-translationally, O-glycosylated. O-fucosylated by POFUT1 on a conserved serine or threonine residue found in the consensus sequence C2-X(4,5)-[S/T]-C3 of EGF domains, where C2 and C3 are the second and third conserved cysteines. In terms of processing, can be either O-glucosylated or O-xylosylated at Ser-92 by POGLUT1. Plasma.

Its subcellular location is the secreted. It carries out the reaction Selective cleavage of Arg-|-Ile bond in factor X to form factor Xa.. Its function is as follows. Initiates the extrinsic pathway of blood coagulation. Serine protease that circulates in the blood in a zymogen form. Factor VII is converted to factor VIIa by factor Xa, factor XIIa, factor IXa, or thrombin by minor proteolysis. In the presence of tissue factor and calcium ions, factor VIIa then converts factor X to factor Xa by limited proteolysis. Factor VIIa also converts factor IX to factor IXa in the presence of tissue factor and calcium. The polypeptide is Coagulation factor VII (F7) (Bos taurus (Bovine)).